A 139-amino-acid chain; its full sequence is Trafficking protein particle complex subunit 2-like protein (139 aa).

It belongs to the TRAPP small subunits family. Sedlin subfamily. As to quaternary structure, component of the multisubunit TRAPP (transport protein particle) complex, which includes at least TRAPPC2, TRAPPC2L, TRAPPC3, TRAPPC3L, TRAPPC4, TRAPPC5, TRAPPC8, TRAPPC9, TRAPPC10, TRAPPC11 and TRAPPC12. Interacts with the heterodimer TRAPPC3-TRAPPC6A.

It localises to the cytoplasm. The protein localises to the perinuclear region. Its subcellular location is the endoplasmic reticulum. It is found in the golgi apparatus. In terms of biological role, may play a role in vesicular transport from endoplasmic reticulum to Golgi. The protein is Trafficking protein particle complex subunit 2-like protein (TRAPPC2L) of Bos taurus (Bovine).